A 210-amino-acid chain; its full sequence is Probable GTP-binding protein EngB (210 aa).

The region spanning 25-199 is the EngB-type G domain; sequence TGIEVAFAGR…RQKLDSWFNE (175 aa). GTP is bound by residues 33-40, 60-64, 78-81, 145-148, and 178-180; these read GRSNAGKS, GRTQL, DLPG, TKAD, and FSS. Mg(2+)-binding residues include Ser40 and Thr62.

This sequence belongs to the TRAFAC class TrmE-Era-EngA-EngB-Septin-like GTPase superfamily. EngB GTPase family. Requires Mg(2+) as cofactor.

Necessary for normal cell division and for the maintenance of normal septation. This is Probable GTP-binding protein EngB from Klebsiella pneumoniae subsp. pneumoniae (strain ATCC 700721 / MGH 78578).